The chain runs to 376 residues: Lactosylceramide 1,3-N-acetyl-beta-D-glucosaminyltransferase (376 aa).

The Cytoplasmic segment spans residues 1-13 (MRLFVSRRVKRWK). A helical; Signal-anchor for type II membrane protein membrane pass occupies residues 14-34 (IFHFFVTCFILSFMVFWSPIN). Over 35-376 (NYIMSHMKSY…NSYPCWAAFA (342 aa)) the chain is Lumenal. The N-linked (GlcNAc...) asparagine glycan is linked to Asn57.

This sequence belongs to the glycosyltransferase 31 family. Highly expressed in adult spleen, placenta and cerebellar Purkinje cells where it colocalizes with HNK-1. Expressed at lower level in brain, lung, thymus and muscle.

It is found in the golgi apparatus membrane. It carries out the reaction a beta-D-Gal-(1-&gt;4)-beta-D-Glc-(1&lt;-&gt;1)-Cer(d18:1(4E)) + UDP-N-acetyl-alpha-D-glucosamine = a beta-D-GlcNAc-(1-&gt;3)-beta-D-Gal-(1-&gt;4)-beta-D-Glc-(1&lt;-&gt;1)-Cer(d18:1(4E)) + UDP + H(+). It catalyses the reaction a neolactoside nLc4Cer(d18:1(4E)) + UDP-N-acetyl-alpha-D-glucosamine = a neolactoside IV(3)-beta-GlcNAc-nLc4Cer(d18:1(4E)) + UDP + H(+). Its pathway is protein modification; protein glycosylation. Functionally, beta-1,3-N-acetylglucosaminyltransferase that plays a key role in the synthesis of lacto- or neolacto-series carbohydrate chains on glycolipids, notably by participating in biosynthesis of HNK-1 and Lewis X carbohydrate structures. Has strong activity toward lactosylceramide (LacCer) and neolactotetraosylceramide (nLc(4)Cer; paragloboside), resulting in the synthesis of Lc(3)Cer and neolactopentaosylceramide (nLc(5)Cer), respectively. Plays a central role in regulating neolacto-series glycolipid synthesis during embryonic development. This chain is Lactosylceramide 1,3-N-acetyl-beta-D-glucosaminyltransferase, found in Mus musculus (Mouse).